Consider the following 312-residue polypeptide: Olfactory receptor 4F6 (312 aa).

Over 1–25 (MDEANHSVVSEFVFLGLSDSRKIQL) the chain is Extracellular. Asn-5 carries an N-linked (GlcNAc...) asparagine glycan. The chain crosses the membrane as a helical span at residues 26–49 (LLFLFFSVFYVSSLMGNLLIVLTV). Topologically, residues 50–57 (TSDPRLQS) are cytoplasmic. Residues 58-79 (PMYFLLANLSIINLVFCSSTAP) form a helical membrane-spanning segment. The Extracellular segment spans residues 80–100 (KMIYDLFRKHKTISFGGCVVQ). Cys-97 and Cys-189 form a disulfide bridge. The helical transmembrane segment at 101 to 120 (IFFIHAVGGTEMVLLIAMAF) threads the bilayer. Topologically, residues 121-139 (DRYVAICKPLHYLTIMNPQ) are cytoplasmic. The helical transmembrane segment at 140 to 158 (RCILFLVISWIIGIIHSVI) threads the bilayer. Residues 159-195 (QLAFVVDLLFCGPNELDSFFCDLPRFIKLACIETYTL) lie on the Extracellular side of the membrane. The chain crosses the membrane as a helical span at residues 196–219 (GFMVTANSGFISLASFLILIISYI). Residues 220–235 (FILVTVQKKSSGGIFK) are Cytoplasmic-facing. Residues 236–258 (AFSMLSAHVIVVVLVFGPLIFFY) traverse the membrane as a helical segment. Topologically, residues 259-269 (IFPFPTSHLDK) are extracellular. Residues 270–289 (FLAIFDAVITPVLNPVIYTF) form a helical membrane-spanning segment. At 290-312 (RNKEMMVAMRRRCSQFVNYSKIF) the chain is on the cytoplasmic side.

It belongs to the G-protein coupled receptor 1 family.

It is found in the cell membrane. In terms of biological role, odorant receptor. This is Olfactory receptor 4F6 (OR4F6) from Homo sapiens (Human).